The sequence spans 107 residues: Metallothionein-1 (107 aa).

A propeptide spanning residues 1 to 2 (MD) is cleaved from the precursor.

Belongs to the metallothionein superfamily. Type 7 family.

Functionally, the metallothioneins are involved in the cellular sequestration of toxic metal ions. Binds 12 cadmium ions per molecule. This chain is Metallothionein-1, found in Tetrahymena pyriformis.